Here is a 561-residue protein sequence, read N- to C-terminus: Putative transport protein AHA_2450 (561 aa).

Helical transmembrane passes span Leu8–Gly28, Ile37–Phe57, Phe66–Leu86, Ile90–Leu110, and Asn161–Val181. RCK C-terminal domains are found at residues Ser206–Asn291 and Lys293–Phe376. The next 5 helical transmembrane spans lie at Leu386–Phe406, Leu409–Leu429, Leu450–His470, Ala476–Phe496, and Thr541–Phe561.

This sequence belongs to the AAE transporter (TC 2.A.81) family. YbjL subfamily.

Its subcellular location is the cell membrane. The chain is Putative transport protein AHA_2450 from Aeromonas hydrophila subsp. hydrophila (strain ATCC 7966 / DSM 30187 / BCRC 13018 / CCUG 14551 / JCM 1027 / KCTC 2358 / NCIMB 9240 / NCTC 8049).